The sequence spans 282 residues: Putative phosphoesterase 244L (282 aa).

A divalent metal cation is bound by residues Asp45, Asn80, and His203.

It belongs to the metallophosphoesterase superfamily. IIV-6 244L family.

The polypeptide is Putative phosphoesterase 244L (Invertebrate iridescent virus 6 (IIV-6)).